Reading from the N-terminus, the 248-residue chain is Pulmonary surfactant-associated protein A (248 aa).

Residues 1–17 (MLLCSLTLMLLWMVASG) form the signal peptide. The region spanning 28 to 100 (GSPGIPGTPG…PGERGPPGFP (73 aa)) is the Collagen-like domain. Residues 29–103 (SPGIPGTPGS…RGPPGFPAYL (75 aa)) are disordered. Over residues 42–51 (PGRDGRDGIK) the composition is skewed to basic and acidic residues. The segment covering 54-65 (PGPPGPMGPPGG) has biased composition (pro residues). Residues 69–82 (LPGRDGMTGAPGLP) show a composition bias toward low complexity. A compositionally biased stretch (basic and acidic residues) spans 84–93 (ERGEKGEPGE). One can recognise a C-type lectin domain in the interval 127-247 (LQGSMLEVGE…CLQYRLAICE (121 aa)). Disulfide bonds link C155-C246 and C224-C238. N-linked (GlcNAc...) asparagine glycosylation occurs at N207. The Ca(2+) site is built by E215, R217, N234, and D235.

It belongs to the SFTPA family. Oligomeric complex of 6 set of homotrimers.

The protein resides in the secreted. It localises to the extracellular space. It is found in the extracellular matrix. Its subcellular location is the surface film. In presence of calcium ions, it binds to surfactant phospholipids and contributes to lower the surface tension at the air-liquid interface in the alveoli of the mammalian lung and is essential for normal respiration. Enhances the expression of MYO18A/SP-R210 on alveolar macrophages. This chain is Pulmonary surfactant-associated protein A (SFTPA1), found in Ovis aries (Sheep).